Here is a 456-residue protein sequence, read N- to C-terminus: Bifunctional protein GlmU (456 aa).

The tract at residues 1–231 (MERTCLAIIL…EEELTGCNTR (231 aa)) is pyrophosphorylase. UDP-N-acetyl-alpha-D-glucosamine is bound by residues 10–13 (LAAG), Lys-24, Gln-77, and 82–83 (GT). Mg(2+) is bound at residue Asp-107. The UDP-N-acetyl-alpha-D-glucosamine site is built by Gly-143, Glu-157, Asn-172, and Asn-229. Asn-229 contributes to the Mg(2+) binding site. The tract at residues 232-252 (AELAYIERLWQQRRRHELMLA) is linker. The tract at residues 253 to 456 (GVSMVAPETV…LARKIAKAAE (204 aa)) is N-acetyltransferase. Positions 318 and 336 each coordinate UDP-N-acetyl-alpha-D-glucosamine. Catalysis depends on His-348, which acts as the Proton acceptor. UDP-N-acetyl-alpha-D-glucosamine contacts are provided by Tyr-351 and Asn-362. Acetyl-CoA contacts are provided by residues Ala-365, 371-372 (NY), Ser-390, Ser-408, and Arg-425.

It in the N-terminal section; belongs to the N-acetylglucosamine-1-phosphate uridyltransferase family. This sequence in the C-terminal section; belongs to the transferase hexapeptide repeat family. In terms of assembly, homotrimer. Requires Mg(2+) as cofactor.

The protein resides in the cytoplasm. The catalysed reaction is alpha-D-glucosamine 1-phosphate + acetyl-CoA = N-acetyl-alpha-D-glucosamine 1-phosphate + CoA + H(+). The enzyme catalyses N-acetyl-alpha-D-glucosamine 1-phosphate + UTP + H(+) = UDP-N-acetyl-alpha-D-glucosamine + diphosphate. It participates in nucleotide-sugar biosynthesis; UDP-N-acetyl-alpha-D-glucosamine biosynthesis; N-acetyl-alpha-D-glucosamine 1-phosphate from alpha-D-glucosamine 6-phosphate (route II): step 2/2. The protein operates within nucleotide-sugar biosynthesis; UDP-N-acetyl-alpha-D-glucosamine biosynthesis; UDP-N-acetyl-alpha-D-glucosamine from N-acetyl-alpha-D-glucosamine 1-phosphate: step 1/1. It functions in the pathway bacterial outer membrane biogenesis; LPS lipid A biosynthesis. In terms of biological role, catalyzes the last two sequential reactions in the de novo biosynthetic pathway for UDP-N-acetylglucosamine (UDP-GlcNAc). The C-terminal domain catalyzes the transfer of acetyl group from acetyl coenzyme A to glucosamine-1-phosphate (GlcN-1-P) to produce N-acetylglucosamine-1-phosphate (GlcNAc-1-P), which is converted into UDP-GlcNAc by the transfer of uridine 5-monophosphate (from uridine 5-triphosphate), a reaction catalyzed by the N-terminal domain. The chain is Bifunctional protein GlmU from Sinorhizobium medicae (strain WSM419) (Ensifer medicae).